The chain runs to 115 residues: uncharacterized protein (115 aa).

This is an uncharacterized protein from Schizosaccharomyces pombe (strain 972 / ATCC 24843) (Fission yeast).